The sequence spans 314 residues: Pantothenate synthetase (314 aa).

ATP is bound at residue 43–50; sequence MGALHEGH. H50 (proton donor) is an active-site residue. Residue Q75 participates in (R)-pantoate binding. Position 75 (Q75) interacts with beta-alanine. Residues 112-131 form a disordered region; sequence MYPDGTRTSVHPGPLGDDLE. 161 to 164 contacts ATP; sequence GEKD. Residue Q167 participates in (R)-pantoate binding. ATP is bound by residues V190 and 198–201; that span reads LSSR.

This sequence belongs to the pantothenate synthetase family. In terms of assembly, homodimer.

It localises to the cytoplasm. The enzyme catalyses (R)-pantoate + beta-alanine + ATP = (R)-pantothenate + AMP + diphosphate + H(+). It participates in cofactor biosynthesis; (R)-pantothenate biosynthesis; (R)-pantothenate from (R)-pantoate and beta-alanine: step 1/1. Functionally, catalyzes the condensation of pantoate with beta-alanine in an ATP-dependent reaction via a pantoyl-adenylate intermediate. This is Pantothenate synthetase from Mycolicibacterium smegmatis (strain ATCC 700084 / mc(2)155) (Mycobacterium smegmatis).